We begin with the raw amino-acid sequence, 582 residues long: 2-succinyl-5-enolpyruvyl-6-hydroxy-3-cyclohexene-1-carboxylate synthase (582 aa).

The protein belongs to the TPP enzyme family. MenD subfamily. In terms of assembly, homodimer. Mg(2+) serves as cofactor. It depends on Mn(2+) as a cofactor. Thiamine diphosphate is required as a cofactor.

The catalysed reaction is isochorismate + 2-oxoglutarate + H(+) = 5-enolpyruvoyl-6-hydroxy-2-succinyl-cyclohex-3-ene-1-carboxylate + CO2. It functions in the pathway quinol/quinone metabolism; 1,4-dihydroxy-2-naphthoate biosynthesis; 1,4-dihydroxy-2-naphthoate from chorismate: step 2/7. It participates in cofactor biosynthesis; phylloquinone biosynthesis. Catalyzes the thiamine diphosphate-dependent decarboxylation of 2-oxoglutarate and the subsequent addition of the resulting succinic semialdehyde-thiamine pyrophosphate anion to isochorismate to yield 2-succinyl-5-enolpyruvyl-6-hydroxy-3-cyclohexene-1-carboxylate (SEPHCHC). The chain is 2-succinyl-5-enolpyruvyl-6-hydroxy-3-cyclohexene-1-carboxylate synthase from Prochlorococcus marinus (strain MIT 9313).